The following is a 473-amino-acid chain: MVAHRARRRKRASATQLYRTCKAAGTCPPDVIPKVEGTTLADRILQWGGLGIYLGGLGIGTGSGTGGRTGYVPLSTRPGTVVDVSVPARPPVVIEPVGPSDPSIVNLLEDSSIINSGSTVPTFSGTGGFEVTSSATTTPAVLDITPATDNVVISSSNFTNPAFTEPSLLEVPQNGEVSGHILVSTPTAGTHSYEEIPMETFASPGTGNEPISSTPVPGVSRIAGPRLYAKAVTQVKVTDPAFLSRPTSLVTFDNPAFEPGDETIIFERPYPPSQVPDPDFMDIIRLHRPALTSRRGTVRFSRLGTKLSMHTRSGKGIGARVHYYQDLSPIGPTEDIEMEPLLAPAENAAGDSIYDVFADVEDADIAFTGRSRSATSSRGYTTVSPLSSTLTTKYGNVTIPFVSPVDVHLHPGPDIITPASTQWPFVPLVPADTTHYVYIDGGDFYLWPVTLFVPRRRRRKRLSYFLADGTVAL.

Positions 1–12 match the Nuclear localization signal motif; sequence MVAHRARRRKRA. The cysteines at positions 21 and 27 are disulfide-linked. Positions 452 to 462 match the Nuclear localization signal motif; that stretch reads FVPRRRRRKRL.

This sequence belongs to the papillomaviridae L2 protein family. Interacts with major capsid protein L1. Interacts with E2; this interaction inhibits E2 transcriptional activity but not the DNA replication function E2. Interacts with host GADD45GIP1. Interacts with host HSPA8; this interaction is required for L2 nuclear translocation. Interacts with host importins KPNB2 and KPNB3. Forms a complex with importin alpha2-beta1 heterodimers via interaction with the importin alpha2 adapter. Interacts with host DYNLT1; this interaction is essential for virus intracellular transport during entry. Interacts (via C-terminus) with host retromer subunits VPS35 and VPS29. Post-translationally, highly phosphorylated.

It localises to the virion. The protein resides in the host nucleus. The protein localises to the host early endosome. It is found in the host Golgi apparatus. In terms of biological role, minor protein of the capsid that localizes along the inner surface of the virion, within the central cavities beneath the L1 pentamers. Plays a role in capsid stabilization through interaction with the major capsid protein L1. Once the virion enters the host cell, L2 escorts the genomic DNA into the nucleus by promoting escape from the endosomal compartments and traffic through the host Golgi network. Mechanistically, the C-terminus of L2 possesses a cell-penetrating peptide that protudes from the host endosome, interacts with host cytoplasmic retromer cargo and thereby mediates the capsid delivery to the host trans-Golgi network. Plays a role through its interaction with host dynein in the intracellular microtubule-dependent transport of viral capsid toward the nucleus. Mediates the viral genome import into the nucleus through binding to host importins. Once within the nucleus, L2 localizes viral genomes to host PML bodies in order to activate early gene expression for establishment of infection. Later on, promotes late gene expression by interacting with the viral E2 protein and by inhibiting its transcriptional activation functions. During virion assembly, encapsidates the genome by direct interaction with the viral DNA. This Human papillomavirus 28 protein is Minor capsid protein L2.